A 721-amino-acid polypeptide reads, in one-letter code: MFHKHSVEIDWGGRPLKLETGKIARQADGAVVATYGETVVLATVVAAKTPREGVDFLPLTVDYIEKTYAAGRIPGGYFKREGRPTEKETLVSRLIDRPIRPLFVDGWRNETQVIVTVLSHDMENDPDILALVATSAALTLSGAPFKGPIGAARVGFINDEYVLNPVLDEMIETQLDLVVAGTADAVLMVESEAKELNEDIMLGAVMFGHRHFQPVVQAIIELAEKAAKEPRDVKVIDESVLEKEILGLIEQDLRAAYAIPVKQDRYAAVGKAKDKVMAHYFPEGQEPQYDKLRIAGVFKELEAKIVRWNILDTGKRIDGRDSTTVRQIIAEVGVLPRAHGSALFTRGETQALVVTTLGTGEDEQYIDSLSGTYKEQFLLHYNFPPFSVGETGRMGGTKRREIGHGKLAWRALHPVLPPHHEFPYTLRVVSEITESNGSSSMASVCGASLALMDAGVPLKRPTAGIAMGLILEGERFAVLSDILGDEDHLGDMDFKVAGTDHGITSLQMDIKIAGITEEIMKVALGQAKEGRIHILGEMSKALTNARAELGEYAPRIETFKIPTDKIREVIGTGGKVIREIVEKTGAKVNIDDDGTVKVASSDGESIKAAIKWIKSIASDPELNAIYDGTVVKVMEFGAFVNFFGAKDGLVHISQLAAGRVQKTSDVVKEGDKVKVKLLGFDDRGKTRLSMKVVDQETGEDLEAKQKAEAEKAKAEGAPAAE.

Mg(2+) is bound by residues aspartate 487 and aspartate 493. The KH domain maps to 554 to 613 (PRIETFKIPTDKIREVIGTGGKVIREIVEKTGAKVNIDDDGTVKVASSDGESIKAAIKWI). Positions 623 to 691 (NAIYDGTVVK…DRGKTRLSMK (69 aa)) constitute an S1 motif domain. The segment at 697-721 (TGEDLEAKQKAEAEKAKAEGAPAAE) is disordered. Over residues 701–714 (LEAKQKAEAEKAKA) the composition is skewed to basic and acidic residues.

The protein belongs to the polyribonucleotide nucleotidyltransferase family. Mg(2+) is required as a cofactor.

The protein localises to the cytoplasm. The enzyme catalyses RNA(n+1) + phosphate = RNA(n) + a ribonucleoside 5'-diphosphate. Its function is as follows. Involved in mRNA degradation. Catalyzes the phosphorolysis of single-stranded polyribonucleotides processively in the 3'- to 5'-direction. In Rhodopseudomonas palustris (strain BisA53), this protein is Polyribonucleotide nucleotidyltransferase.